Reading from the N-terminus, the 419-residue chain is UDP-N-acetylglucosamine 1-carboxyvinyltransferase (419 aa).

22-23 contributes to the phosphoenolpyruvate binding site; it reads KN. R95 contributes to the UDP-N-acetyl-alpha-D-glucosamine binding site. C119 acts as the Proton donor in catalysis. C119 carries the post-translational modification 2-(S-cysteinyl)pyruvic acid O-phosphothioketal. UDP-N-acetyl-alpha-D-glucosamine is bound by residues 164–167, D308, and I330; that span reads KVSV.

Belongs to the EPSP synthase family. MurA subfamily.

It is found in the cytoplasm. The enzyme catalyses phosphoenolpyruvate + UDP-N-acetyl-alpha-D-glucosamine = UDP-N-acetyl-3-O-(1-carboxyvinyl)-alpha-D-glucosamine + phosphate. Its pathway is cell wall biogenesis; peptidoglycan biosynthesis. In terms of biological role, cell wall formation. Adds enolpyruvyl to UDP-N-acetylglucosamine. This chain is UDP-N-acetylglucosamine 1-carboxyvinyltransferase, found in Rickettsia felis (strain ATCC VR-1525 / URRWXCal2) (Rickettsia azadi).